Here is a 3387-residue protein sequence, read N- to C-terminus: Genome polyprotein (3387 aa).

Residues 1 to 100 (MNQRKKVVRP…LNILNGRKRS (100 aa)) lie on the Cytoplasmic side of the membrane. The tract at residues 36–71 (LFSGKGPLRMVLAFITFLRVLSIPPTAGILKRWGQL) is hydrophobic; homodimerization of capsid protein C. The propeptide at 100 to 113 (STITLLCLIPTVMA) is ER anchor for the capsid protein C, removed in mature form by serine protease NS3. A helical transmembrane segment spans residues 101-117 (TITLLCLIPTVMAFSLS). Residues 118–237 (TRDGEPLMIV…GAWKHAQRVE (120 aa)) are Extracellular-facing. Residue N182 is glycosylated (N-linked (GlcNAc...) asparagine; by host). A helical membrane pass occupies residues 238–258 (SWILRNPGFALLAGFMAYMIG). The Cytoplasmic segment spans residues 259-265 (QTGIQRT). A helical transmembrane segment spans residues 266 to 279 (VFFVLMMLVAPSYG). The Extracellular portion of the chain corresponds to 280–725 (MRCVGVGNRD…HQVFGSVYTT (446 aa)). Intrachain disulfides connect C282–C309, C339–C400, C353–C384, and C371–C395. An N-linked (GlcNAc...) asparagine; by host glycan is attached at N346. Positions 377–390 (DRGWGNGCGLFGKG) are fusion peptide. A glycan (N-linked (GlcNAc...) asparagine; by host) is linked at N432. 2 disulfides stabilise this stretch: C464–C564 and C581–C612. The chain crosses the membrane as a helical span at residues 726-746 (MFGGVSWMIRILIGFLVLWIG). Residues 747–751 (TNSRN) lie on the Cytoplasmic side of the membrane. Residues 752–772 (TSMAMTCIAVGGITLFLGFTV) traverse the membrane as a helical segment. Residues 773 to 1194 (QADMGCVASW…MLGDTMSGRI (422 aa)) lie on the Extracellular side of the membrane. 6 disulfide bridges follow: C778/C789, C829/C917, C953/C997, C1054/C1103, C1065/C1087, and C1086/C1090. N904 and N981 each carry an N-linked (GlcNAc...) asparagine; by host glycan. A helical transmembrane segment spans residues 1195–1218 (GGQIHLAIMAVFKMSPGYVLGVFL). Residues 1219–1224 (RKLTSR) lie on the Lumenal side of the membrane. The helical transmembrane segment at 1225–1243 (ETALMVIGMAMTTVLSIPH) threads the bilayer. The Cytoplasmic portion of the chain corresponds to 1244–1267 (DLMELIDGISLGLILLKIVTQFDN). A helical membrane pass occupies residues 1268-1288 (TQVGTLALSLTFIRSTMPLVM). A topological domain (lumenal) is located at residue A1289. The helical transmembrane segment at 1290-1308 (WRTIMAVLFVVTLIPLCRT) threads the bilayer. At 1309-1316 (SCLQKQSH) the chain is on the lumenal side. The helical transmembrane segment at 1317–1337 (WVEITALILGAQALPVYLMTL) threads the bilayer. At 1338 to 1345 (MKGASRRS) the chain is on the cytoplasmic side. The helical transmembrane segment at 1346–1366 (WPLNEGIMAVGLVSLLGSALL) threads the bilayer. The Lumenal segment spans residues 1367–1369 (KND). The helical transmembrane segment at 1370 to 1390 (VPLAGPMVAGGLLLAAYVMSG) threads the bilayer. The Cytoplasmic portion of the chain corresponds to 1391 to 1437 (SSADLSLEKAANVQWDEMADITGSSPIIEVKQDEDGSFSIRDVEETN). An interacts with and activates NS3 protease region spans residues 1397–1436 (LEKAANVQWDEMADITGSSPIIEVKQDEDGSFSIRDVEET). Residues 1438-1458 (MITLLVKLALITVSGLYPLAI) constitute an intramembrane region (helical). Topologically, residues 1459–2143 (PVTMTLWYMW…QHALNELPES (685 aa)) are cytoplasmic. The Peptidase S7 domain maps to 1475-1652 (SGALWDVPSP…ERIGEPDYEV (178 aa)). Catalysis depends on charge relay system; for serine protease NS3 activity residues H1525, D1549, and S1609. The 157-residue stretch at 1654–1810 (EDIFRKKRLT…QSNSPIEDIE (157 aa)) folds into the Helicase ATP-binding domain. The segment at 1658–1661 (RKKR) is important for RNA-binding. Residue 1667 to 1674 (LHPGAGKT) coordinates ATP. Residues 1758-1761 (DEAH) carry the DEAH box motif. One can recognise a Helicase C-terminal domain in the interval 1820–1987 (TGFDWITDYQ…IIPTLFGPER (168 aa)). K1862 carries the N6-acetyllysine; by host modification. A helical transmembrane segment spans residues 2144–2164 (LETLMLVALLGAMTAGIFLFF). The Lumenal segment spans residues 2165–2169 (MQGKG). Positions 2170-2190 (IGKLSMGLITIAVASGLLWVA) form an intramembrane region, helical. A topological domain (lumenal) is located at residue E2191. A helical membrane pass occupies residues 2192–2212 (IQPQWIAASIILEFFLMVLLI). Topologically, residues 2213-2225 (PEPEKQRTPQDNQ) are cytoplasmic. A helical transmembrane segment spans residues 2226 to 2246 (LIYVILTILTIIGLIAANEMG). The Lumenal portion of the chain corresponds to 2247–2270 (LIEKTKTDFGFYQVKTETTILDVD). The segment at residues 2271 to 2291 (LRPASAWTLYAVATTILTPML) is an intramembrane region (helical). Residues 2292-2301 (RHTIENTSAN) are Lumenal-facing. N2297 and N2301 each carry an N-linked (GlcNAc...) asparagine; by host glycan. Residues 2302 to 2322 (LSLAAIANQAAVLMGLGKGWP) constitute an intramembrane region (helical). Topologically, residues 2323–2343 (LHRMDLGVPLLAMGCYSQVNP) are lumenal. A helical transmembrane segment spans residues 2344–2364 (TTLTASLVMLLVHYAIIGPGL). Residues 2365-2409 (QAKATREAQKRTAAGIMKNPTVDGITVIDLEPISYDPKFEKQLGQ) are Cytoplasmic-facing. A helical transmembrane segment spans residues 2410–2430 (VMLLVLCAGQLLLMRTTWAFC). The Lumenal portion of the chain corresponds to 2431–2455 (EVLTLATGPILTLWEGNPGRFWNTT). N-linked (GlcNAc...) asparagine; by host glycosylation is present at N2453. The helical transmembrane segment at 2456–2476 (IAVSTANIFRGSYLAGAGLAF) threads the bilayer. At 2477–3387 (SLIKNAQTPR…SAPSESEGVL (911 aa)) the chain is on the cytoplasmic side. In terms of domain architecture, mRNA cap 0-1 NS5-type MT spans 2489-2751 (TGTTGETLGE…DVDLGAGTRS (263 aa)). S2543 contributes to the S-adenosyl-L-methionine binding site. S2543 is subject to Phosphoserine. K2548 acts as the For 2'-O-MTase activity in catalysis. Positions 2564 to 2567 (VVDL) match the SUMO-interacting motif motif. S-adenosyl-L-methionine contacts are provided by G2573, W2574, T2591, K2592, D2618, and V2619. D2633 (for 2'-O-MTase activity) is an active-site residue. S-adenosyl-L-methionine is bound at residue I2634. Catalysis depends on for 2'-O-MTase activity residues K2668 and E2704. An S-adenosyl-L-methionine-binding site is contributed by Y2706. Positions 2925, 2929, 2934, and 2937 each coordinate Zn(2+). The 151-residue stretch at 3016 to 3166 (LMYADDTAGW…PLDERFGTSL (151 aa)) folds into the RdRp catalytic domain. Residues H3200, C3216, and C3335 each coordinate Zn(2+).

The protein in the N-terminal section; belongs to the class I-like SAM-binding methyltransferase superfamily. mRNA cap 0-1 NS5-type methyltransferase family. As to quaternary structure, homodimer. Interacts (via N-terminus) with host EXOC1 (via C-terminus); this interaction results in EXOC1 degradation through the proteasome degradation pathway. Forms heterodimers with envelope protein E in the endoplasmic reticulum and Golgi. In terms of assembly, homodimer; in the endoplasmic reticulum and Golgi. Interacts with protein prM. Interacts with non-structural protein 1. As to quaternary structure, homodimer; Homohexamer when secreted. Interacts with envelope protein E. Interacts (via N-terminus) with serine protease NS3. In terms of assembly, forms a heterodimer with serine protease NS3. May form homooligomers. As to quaternary structure, forms a heterodimer with NS2B. Interacts with NS4B. Interacts with unphosphorylated RNA-directed RNA polymerase NS5; this interaction stimulates RNA-directed RNA polymerase NS5 guanylyltransferase activity. Interacts with host SHFL. Interacts with host MAVS; this interaction inhibits the synthesis of IFN-beta. Interacts with host SHFL. Interacts with host AUP1; the interaction occurs in the presence of Dengue virus NS4B and induces lipophagy which facilitates production of virus progeny particles. In terms of assembly, interacts with serine protease NS3. As to quaternary structure, homodimer. Interacts with host STAT2; this interaction inhibits the phosphorylation of the latter, and, when all viral proteins are present (polyprotein), targets STAT2 for degradation. Interacts with serine protease NS3. Interacts with host PAF1 complex; the interaction may prevent the recruitment of the PAF1 complex to interferon-responsive genes, and thus reduces the immune response. In terms of processing, specific enzymatic cleavages in vivo yield mature proteins. Cleavages in the lumen of endoplasmic reticulum are performed by host signal peptidase, whereas cleavages in the cytoplasmic side are performed by serine protease NS3. Signal cleavage at the 2K-4B site requires a prior NS3 protease-mediated cleavage at the 4A-2K site. Post-translationally, cleaved in post-Golgi vesicles by a host furin, releasing the mature small envelope protein M, and peptide pr. This cleavage is incomplete as up to 30% of viral particles still carry uncleaved prM. N-glycosylated. In terms of processing, N-glycosylated. The excreted form is glycosylated and this is required for efficient secretion of the protein from infected cells. Post-translationally, acetylated by host KAT5. Acetylation modulates NS3 RNA-binding and unwinding activities and plays an important positive role for viral replication. Sumoylation of RNA-directed RNA polymerase NS5 increases NS5 protein stability allowing proper viral RNA replication. In terms of processing, phosphorylated on serines residues. This phosphorylation may trigger NS5 nuclear localization.

Its subcellular location is the virion. It is found in the host nucleus. The protein resides in the host cytoplasm. The protein localises to the host perinuclear region. It localises to the secreted. Its subcellular location is the virion membrane. It is found in the host endoplasmic reticulum membrane. The protein resides in the host mitochondrion. The catalysed reaction is Selective hydrolysis of -Xaa-Xaa-|-Yaa- bonds in which each of the Xaa can be either Arg or Lys and Yaa can be either Ser or Ala.. It catalyses the reaction RNA(n) + a ribonucleoside 5'-triphosphate = RNA(n+1) + diphosphate. It carries out the reaction a ribonucleoside 5'-triphosphate + H2O = a ribonucleoside 5'-diphosphate + phosphate + H(+). The enzyme catalyses ATP + H2O = ADP + phosphate + H(+). The catalysed reaction is a 5'-end (5'-triphosphoguanosine)-ribonucleoside in mRNA + S-adenosyl-L-methionine = a 5'-end (N(7)-methyl 5'-triphosphoguanosine)-ribonucleoside in mRNA + S-adenosyl-L-homocysteine. It catalyses the reaction a 5'-end (N(7)-methyl 5'-triphosphoguanosine)-ribonucleoside in mRNA + S-adenosyl-L-methionine = a 5'-end (N(7)-methyl 5'-triphosphoguanosine)-(2'-O-methyl-ribonucleoside) in mRNA + S-adenosyl-L-homocysteine + H(+). Plays a role in virus budding by binding to the cell membrane and gathering the viral RNA into a nucleocapsid that forms the core of a mature virus particle. During virus entry, may induce genome penetration into the host cytoplasm after hemifusion induced by the surface proteins. Can migrate to the cell nucleus where it modulates host functions. Overcomes the anti-viral effects of host EXOC1 by sequestering and degrading the latter through the proteasome degradation pathway. Functionally, regulates the ATPase activity of the NS3 helicase activity. NS4A allows NS3 helicase to conserve energy during unwinding. Plays a role in the inhibition of the host innate immune response. Interacts with host MAVS and thereby prevents the interaction between RIGI and MAVS. In turn, IFN-beta production is impaired. Interacts with host AUP1 which mediates induction of lipophagy in host cells and facilitates production of virus progeny particles. In terms of biological role, inhibits RNA silencing by interfering with host Dicer. Its function is as follows. Prevents premature fusion activity of envelope proteins in trans-Golgi by binding to envelope protein E at pH6.0. After virion release in extracellular space, gets dissociated from E dimers. Acts as a chaperone for envelope protein E during intracellular virion assembly by masking and inactivating envelope protein E fusion peptide. prM is the only viral peptide matured by host furin in the trans-Golgi network probably to avoid catastrophic activation of the viral fusion activity in acidic Golgi compartment prior to virion release. prM-E cleavage is inefficient, and many virions are only partially matured. These uncleaved prM would play a role in immune evasion. Functionally, may play a role in virus budding. Exerts cytotoxic effects by activating a mitochondrial apoptotic pathway through M ectodomain. May display a viroporin activity. In terms of biological role, binds to host cell surface receptor and mediates fusion between viral and cellular membranes. Envelope protein is synthesized in the endoplasmic reticulum in the form of heterodimer with protein prM. They play a role in virion budding in the ER, and the newly formed immature particle is covered with 60 spikes composed of heterodimer between precursor prM and envelope protein E. The virion is transported to the Golgi apparatus where the low pH causes dissociation of PrM-E heterodimers and formation of E homodimers. prM-E cleavage is inefficient, and many virions are only partially matured. These uncleaved prM would play a role in immune evasion. Its function is as follows. Involved in immune evasion, pathogenesis and viral replication. Once cleaved off the polyprotein, is targeted to three destinations: the viral replication cycle, the plasma membrane and the extracellular compartment. Essential for viral replication. Required for formation of the replication complex and recruitment of other non-structural proteins to the ER-derived membrane structures. Excreted as a hexameric lipoparticle that plays a role against host immune response. Antagonizing the complement function. Binds to the host macrophages and dendritic cells. Inhibits signal transduction originating from Toll-like receptor 3 (TLR3). Disrupts the host endothelial glycocalyx layer of host pulmonary microvascular endothelial cells, inducing degradation of sialic acid and shedding of heparan sulfate proteoglycans. NS1 induces expression of sialidases, heparanase, and activates cathepsin L, which activates heparanase via enzymatic cleavage. These effects are probably linked to the endothelial hyperpermeability observed in severe dengue disease. Functionally, component of the viral RNA replication complex that functions in virion assembly and antagonizes the host immune response. In terms of biological role, required cofactor for the serine protease function of NS3. May have membrane-destabilizing activity and form viroporins. Its function is as follows. Displays three enzymatic activities: serine protease, NTPase and RNA helicase. NS3 serine protease, in association with NS2B, performs its autocleavage and cleaves the polyprotein at dibasic sites in the cytoplasm: C-prM, NS2A-NS2B, NS2B-NS3, NS3-NS4A, NS4A-2K and NS4B-NS5. NS3 RNA helicase binds RNA and unwinds dsRNA in the 3' to 5' direction. Functions as a signal peptide for NS4B and is required for the interferon antagonism activity of the latter. Functionally, induces the formation of ER-derived membrane vesicles where the viral replication takes place. Inhibits interferon (IFN)-induced host STAT1 phosphorylation and nuclear translocation, thereby preventing the establishment of cellular antiviral state by blocking the IFN-alpha/beta pathway. In terms of biological role, replicates the viral (+) and (-) RNA genome, and performs the capping of genomes in the cytoplasm. NS5 methylates viral RNA cap at guanine N-7 and ribose 2'-O positions. Besides its role in RNA genome replication, also prevents the establishment of cellular antiviral state by blocking the interferon-alpha/beta (IFN-alpha/beta) signaling pathway. Inhibits host TYK2 and STAT2 phosphorylation, thereby preventing activation of JAK-STAT signaling pathway. May reduce immune responses by preventing the recruitment of the host PAF1 complex to interferon-responsive genes. The sequence is that of Genome polyprotein from Dengue virus type 4 (strain Dominica/814669/1981) (DENV-4).